The chain runs to 186 residues: Coiled-coil domain-containing protein ORF13 (186 aa).

2 coiled-coil regions span residues 2-30 (GIKE…DFIK) and 63-85 (LREK…QRDK).

The chain is Coiled-coil domain-containing protein ORF13 from Helicobacter pylori (strain 35A).